A 539-amino-acid polypeptide reads, in one-letter code: E3 ubiquitin-protein ligase arc-1 (539 aa).

The RING-type zinc finger occupies 6-53 (CNVCNEEYSARDPLKCPRVLTGCGHTICHNCAISIAGRNSSIFCPFDR). The B box-type zinc finger occupies 103-149 (LLNLECDEDSEHVAVIYCTVCDSNLCERCSESTHSTNVLSKHRRIPL). The segment at 369-539 (ESRVVLLGLD…LSRLNGTCPV (171 aa)) is ARF-like. Residues 376-383 (GLDGAGKT), 422-426 (DVGGL), and 481-484 (NRKD) each bind GTP.

In the C-terminal section; belongs to the small GTPase superfamily. Arf family.

It carries out the reaction S-ubiquitinyl-[E2 ubiquitin-conjugating enzyme]-L-cysteine + [acceptor protein]-L-lysine = [E2 ubiquitin-conjugating enzyme]-L-cysteine + N(6)-ubiquitinyl-[acceptor protein]-L-lysine.. It functions in the pathway protein modification; protein ubiquitination. Its function is as follows. Acts as an E3 ubiquitin-protein ligase. In Caenorhabditis elegans, this protein is E3 ubiquitin-protein ligase arc-1 (arc-1).